The following is a 110-amino-acid chain: UPF0339 protein YegP (110 aa).

2 tandem repeats follow at residues Ser10 to Lys58 and Ala61 to Asn109.

It belongs to the UPF0339 family. Duplicated subfamily.

The chain is UPF0339 protein YegP (yegP) from Shigella flexneri.